Reading from the N-terminus, the 182-residue chain is uncharacterized protein (182 aa).

The protein resides in the plastid. It is found in the cyanelle. This is an uncharacterized protein from Cyanophora paradoxa.